A 412-amino-acid chain; its full sequence is Eukaryotic initiation factor 4A-2 (412 aa).

Ala-2 carries the N-acetylalanine modification. Positions 39-67 (ESFDAMGLQENLLRGIYAYGFEKPSAIQQ) match the Q motif motif. One can recognise a Helicase ATP-binding domain in the interval 70–240 (IVPFCKGLDV…RKFMSKPVRI (171 aa)). Residue 83-90 (AQSGTGKT) participates in ATP binding. Thr-145 bears the Phosphothreonine mark. The DEAD box motif lies at 188-191 (DEAD). The Helicase C-terminal domain maps to 251 to 412 (GIKQFYVNVE…ELPSNVADLL (162 aa)).

This sequence belongs to the DEAD box helicase family. eIF4A subfamily. As to quaternary structure, eIF4F is a multi-subunit complex, the composition of which varies with external and internal environmental conditions. It is composed of at least EIF4A, EIF4E and EIF4G. As to expression, ubiquitous. Preferentially expressed in flowers, young leaves and roots.

It localises to the cytoplasm. It catalyses the reaction ATP + H2O = ADP + phosphate + H(+). Its function is as follows. ATP-dependent RNA helicase which is a subunit of the eIF4F complex involved in cap recognition and is required for mRNA binding to ribosome. In the current model of translation initiation, eIF4A unwinds RNA secondary structures in the 5'-UTR of mRNAs which is necessary to allow efficient binding of the small ribosomal subunit, and subsequent scanning for the initiator codon. In Arabidopsis thaliana (Mouse-ear cress), this protein is Eukaryotic initiation factor 4A-2 (TIF4A-2).